The sequence spans 101 residues: Chaperone modulatory protein CbpM (101 aa).

It belongs to the CbpM family.

In terms of biological role, interacts with CbpA and inhibits both the DnaJ-like co-chaperone activity and the DNA binding activity of CbpA. Together with CbpA, modulates the activity of the DnaK chaperone system. Does not inhibit the co-chaperone activity of DnaJ. This Pseudomonas putida (strain W619) protein is Chaperone modulatory protein CbpM.